We begin with the raw amino-acid sequence, 148 residues long: Glutamyl-tRNA(Gln) amidotransferase subunit C, mitochondrial (148 aa).

This sequence belongs to the GatC family. In terms of assembly, subunit of the heterotrimeric GatCAB amidotransferase (AdT) complex, composed of A, B and C subunits.

The protein localises to the mitochondrion. It catalyses the reaction L-glutamyl-tRNA(Gln) + L-glutamine + ATP + H2O = L-glutaminyl-tRNA(Gln) + L-glutamate + ADP + phosphate + H(+). Allows the formation of correctly charged Gln-tRNA(Gln) through the transamidation of misacylated Glu-tRNA(Gln) in the mitochondria. The reaction takes place in the presence of glutamine and ATP through an activated gamma-phospho-Glu-tRNA(Gln). The chain is Glutamyl-tRNA(Gln) amidotransferase subunit C, mitochondrial from Drosophila pseudoobscura pseudoobscura (Fruit fly).